Consider the following 78-residue polypeptide: Acyl carrier protein (78 aa).

Positions 2-77 constitute a Carrier domain; that stretch reads SDTVERVKKI…DAVKFIDKAS (76 aa). Ser-37 is subject to O-(pantetheine 4'-phosphoryl)serine.

Belongs to the acyl carrier protein (ACP) family. 4'-phosphopantetheine is transferred from CoA to a specific serine of apo-ACP by AcpS. This modification is essential for activity because fatty acids are bound in thioester linkage to the sulfhydryl of the prosthetic group.

The protein localises to the cytoplasm. Its pathway is lipid metabolism; fatty acid biosynthesis. Its function is as follows. Carrier of the growing fatty acid chain in fatty acid biosynthesis. In Bartonella quintana (strain Toulouse) (Rochalimaea quintana), this protein is Acyl carrier protein.